Reading from the N-terminus, the 229-residue chain is Heptaprenylglyceryl phosphate synthase (229 aa).

A sn-glycerol 1-phosphate-binding site is contributed by lysine 12. Mg(2+) is bound by residues aspartate 14 and threonine 40. Sn-glycerol 1-phosphate is bound by residues 159–164, glycine 189, and 209–210; these read YIEYSG and GN.

This sequence belongs to the GGGP/HepGP synthase family. Group I subfamily. Homodimer. The cofactor is Mg(2+).

The catalysed reaction is sn-glycerol 1-phosphate + all-trans-heptaprenyl diphosphate = 3-heptaprenyl-sn-glycero-1-phosphate + diphosphate. Its pathway is membrane lipid metabolism; glycerophospholipid metabolism. Prenyltransferase that catalyzes in vivo the transfer of the heptaprenyl moiety of heptaprenyl pyrophosphate (HepPP; 35 carbon atoms) to the C3 hydroxyl of sn-glycerol-1-phosphate (G1P), producing heptaprenylglyceryl phosphate (HepGP). This reaction is an ether-bond-formation step in the biosynthesis of archaea-type G1P-based membrane lipids found in Bacillales. This is Heptaprenylglyceryl phosphate synthase from Staphylococcus carnosus (strain TM300).